The primary structure comprises 415 residues: MAKKNPKILSIVLAGGEGTRLMPLTRDRAKPAVPFGGVYRLIDFPLSNLVNSGYSQVIVLTQYKSHSLDRHISQLWRFSTLLGNYVSPVPAQQRLGKHWYLGSADAVYQTINIIEDVQPDIVVIVGADHVYRMDFEQMVNQHIESGAEFTVAGIRQPIEQSSQFGVIEVDPEHPNMIKSFQEKPKETTGLPDNPNEILASMGNYVANTDALFNALSIDSKAENTKHDMGGDIAPFFAERNEAGVYDFSRNEIPGATTTDHAYWRDVGTIRQFYDAHMDLISYIPEFNLYNMEWPIYTSSGNLPPAKFVHAAGDRIGHATDSIVSPGVIVSGGEIHHSVISPNVRVHSWSQVNDSILFDNVEINRRARVNRAILDKNVVLTENSTVGLDVEHDLARGFTVTSDGITVVPKGTVVDD.

Residues Tyr100, Gly165, 182 to 183 (EK), and Ser200 contribute to the alpha-D-glucose 1-phosphate site.

Belongs to the bacterial/plant glucose-1-phosphate adenylyltransferase family. As to quaternary structure, homotetramer.

It carries out the reaction alpha-D-glucose 1-phosphate + ATP + H(+) = ADP-alpha-D-glucose + diphosphate. It functions in the pathway glycan biosynthesis; glycogen biosynthesis. In terms of biological role, involved in the biosynthesis of ADP-glucose, a building block required for the elongation reactions to produce glycogen. Catalyzes the reaction between ATP and alpha-D-glucose 1-phosphate (G1P) to produce pyrophosphate and ADP-Glc. The protein is Glucose-1-phosphate adenylyltransferase of Bifidobacterium animalis subsp. lactis (strain AD011).